The chain runs to 107 residues: MKSLLVCLVLAVVVLVASGHHVELCKKNDAELKEALTCITSKLPAALGCNDKSCVFEKLCKEGDLDEALKKHFTEAEVQTLHTTATDCDHSHGHEHSHGHEHGHGHH.

Residues 1–19 (MKSLLVCLVLAVVVLVASG) form the signal peptide. 3 disulfides stabilise this stretch: Cys25–Cys60, Cys38–Cys88, and Cys49–Cys54. Residues 86-107 (TDCDHSHGHEHSHGHEHGHGHH) are disordered. A compositionally biased stretch (basic and acidic residues) spans 87–107 (DCDHSHGHEHSHGHEHGHGHH).

The protein resides in the secreted. Functionally, has bacteriostatic activity against Gram-positive bacteria, but not against Gram-negative bacteria. Has fungistatic activity against some but not all fungi. Binds and sequesters copper and iron ions. Copper-chelating is crucial for antimicrobial activity against M.luteus. The polypeptide is Antimicrobial peptide microplusin (Ixodes scapularis (Black-legged tick)).